A 383-amino-acid chain; its full sequence is Na(+)/H(+) antiporter NhaA (383 aa).

A run of 11 helical transmembrane segments spans residues 14-34 (AGGI…NSPL), 47-67 (FGMS…FLLI), 87-107 (IFPA…YVAF), 117-137 (GWAI…ALLG), 146-166 (VFLL…IALF), 171-191 (LSSM…MLNA), 205-225 (AILW…GVVI), 252-272 (VAFG…LEGV), 280-300 (MLPL…IFSF), 321-341 (IFAV…ISSL), and 356-376 (LGIL…LHFS).

This sequence belongs to the NhaA Na(+)/H(+) (TC 2.A.33) antiporter family.

The protein resides in the cell inner membrane. The catalysed reaction is Na(+)(in) + 2 H(+)(out) = Na(+)(out) + 2 H(+)(in). The enzyme catalyses Li(+)(in) + 2 H(+)(out) = Li(+)(out) + 2 H(+)(in). Activity is regulated by pH. Active at alkaline pH. Amiloride strongly reduces affinity for Na(+), but does not change the Vmax. Functionally, na(+)/H(+) antiporter that extrudes sodium in exchange for external protons. Can also transport lithium and potassium. The polypeptide is Na(+)/H(+) antiporter NhaA (Vibrio parahaemolyticus serotype O3:K6 (strain RIMD 2210633)).